A 504-amino-acid polypeptide reads, in one-letter code: Dihydrolipoamide dehydrogenase (504 aa).

The transit peptide at 1 to 34 (MLSQRLIGRTAVKSAFRPSGLPTVVNASRWRRGY) directs the protein to the mitochondrion. Residues 69–78 (EKRGTLGGTC), K87, G151, and 180–182 (TGS) contribute to the FAD site. A disulfide bridge links C78 with C83. NAD(+)-binding positions include 217-224 (GGGIIGLE), E240, V275, and G310. Residues D351 and 357–360 (MLAH) each bind FAD. The active-site Proton acceptor is H483.

This sequence belongs to the class-I pyridine nucleotide-disulfide oxidoreductase family. In terms of assembly, eukaryotic pyruvate dehydrogenase (PDH) complexes are organized as a core consisting of the oligomeric dihydrolipoamide acetyl-transferase (E2), around which are arranged multiple copies of pyruvate dehydrogenase (E1), dihydrolipoamide dehydrogenase (E3) and protein X (E3BP) bound by non-covalent bonds. The Chaetomium thermophilum PDH complex contains 60 E2 units, 12 E3BP units, about 20 E1 units, and 12 or more E3 units. The units are organized in 1 E2 60-mer, 4 E3BP trimers, about 20 E1 tetramers, and a maximum of 12 E3 dimers. The E3BP trimers are bound inside the icosahedral core with tetrahedral symmetry. The cofactor is FAD.

The protein resides in the mitochondrion. The catalysed reaction is N(6)-[(R)-dihydrolipoyl]-L-lysyl-[protein] + NAD(+) = N(6)-[(R)-lipoyl]-L-lysyl-[protein] + NADH + H(+). Functionally, lipoamide dehydrogenase is a component of the alpha-ketoacid dehydrogenase complexes. This includes the pyruvate dehydrogenase complex, which catalyzes the overall conversion of pyruvate to acetyl-CoA and CO(2). Also acts as a component of the glycine cleavage system (glycine decarboxylase complex), which catalyzes the degradation of glycine. The 10-megadalton pyruvate dehydrogenase complex contains multiple copies of three enzymatic components: pyruvate dehydrogenase (E1), dihydrolipoamide acetyltransferase (E2) and lipoamide dehydrogenase (E3) and catalyzes the overall oxidative decarboxylation of pyruvate to form acetyl-CoA and CO(2). Within the complex, pyruvate and thiamine pyrophosphate (TPP or vitamin B1) are bound by pyruvate dehydrogenase E1 subunits alpha and beta and pyruvate is decarboxylated leading to the 2-carbon hydrohyethyl bound to TPP. The E2 component contains covalently-bound lipoyl cofactors and transfers the hydroxyethyl group from TPP to an oxidized form of covalently bound lipoamide, and the resulting acetyl group is then transferred to free coenzyme A to form acetyl-CoA and reduced dihydrolipoamide-E2. Finally, the flavoprotein dihydrolipoamide dehydrogenase (E3) re-oxidizes the lipoyl group of dihydrolipoamide-E2 to form lipoamide-E2 and NADH. A fourth subunit, E3BP, is responsible for tethering E3 in proximity to the core, forming the entire metabolon. This is Dihydrolipoamide dehydrogenase from Chaetomium thermophilum (strain DSM 1495 / CBS 144.50 / IMI 039719) (Thermochaetoides thermophila).